A 2237-amino-acid chain; its full sequence is Zinc finger protein 318 (2237 aa).

Composition is skewed to low complexity over residues 1 to 12 (MYRSGSRSSVSS) and 30 to 39 (GASSGPTRRP). Positions 1–221 (MYRSGSRSSV…DMDRDDLTDD (221 aa)) are disordered. The segment at 1 to 1114 (MYRSGSRSSV…THMHNKKHTQ (1114 aa)) is interaction with AR. Residue S40 is modified to Phosphoserine. Positions 53 to 66 (PARRHRSPSGHRGR) are enriched in basic residues. Residues S69, S109, and S111 each carry the phosphoserine modification. Over residues 140–156 (IRGESRADFARDGRGDH) the composition is skewed to basic and acidic residues. Phosphoserine occurs at positions 167 and 205. At Y237 the chain carries Phosphotyrosine. Phosphoserine occurs at positions 239 and 246. The disordered stretch occupies residues 263–350 (LHRPEFSPQS…SPRFLDPEFR (88 aa)). 2 stretches are compositionally biased toward basic and acidic residues: residues 274 to 290 (CHDE…DKLK) and 297 to 317 (RSEE…EKVH). The segment covering 321 to 332 (GDHSSFTSGTRN) has biased composition (polar residues). A coiled-coil region spans residues 348-376 (EFRELDLARRKREEEEEQSRSLSQELVGV). 4 positions are modified to phosphoserine: S497, S502, S531, and S557. 2 disordered regions span residues 551-612 (QEKR…ESLE) and 645-732 (QERL…TKNS). Residues 560–576 (DIEDEEKFLYGDEEEDI) show a composition bias toward acidic residues. Glycyl lysine isopeptide (Lys-Gly) (interchain with G-Cter in SUMO2) cross-links involve residues K577, K583, K596, and K607. A compositionally biased stretch (basic and acidic residues) spans 577–586 (KSESPLKSLE). The span at 592–602 (GTRQKANSLPS) shows a compositional bias: polar residues. 2 stretches are compositionally biased toward basic and acidic residues: residues 658-677 (SADR…HFSA) and 692-706 (RSSD…ETHH). Position 865 is a phosphothreonine (T865). The stretch at 904 to 1003 (EKNRASQKQK…SELDKVAQIL (100 aa)) forms a coiled coil. Composition is skewed to basic and acidic residues over residues 945-964 (QQGE…KDPL), 1013-1037 (KSSN…EKEL), and 1047-1056 (KESKMNEKSC). Disordered regions lie at residues 945–966 (QQGE…PLLM) and 1013–1072 (KSSN…TVKQ). At S1032 the chain carries Phosphoserine. Polar residues predominate over residues 1058 to 1072 (KSPSSTESLQPTVKQ). A Phosphoserine modification is found at S1059. 2 consecutive Matrin-type zinc fingers follow at residues 1085–1119 (AGSH…LDPY) and 1158–1180 (FYCQ…VKGH). Disordered stretches follow at residues 1245–1289 (VKED…KKEP), 1302–1342 (SWKK…VGKA), and 1366–1395 (TTST…VSKP). 3 stretches are compositionally biased toward basic and acidic residues: residues 1280–1289 (QVKEEVKKEP), 1304–1313 (KKPEKEEEKG), and 1321–1341 (PKED…EVGK). S1445 bears the Phosphoserine mark. Disordered regions lie at residues 1449 to 1497 (KVEL…LSAP), 1614 to 1651 (HETK…SMSS), 1727 to 1770 (TSGS…HCQT), and 1790 to 1867 (EVYQ…MTGH). Pro residues predominate over residues 1469 to 1490 (LPPPPPPPPPPPPPPPPPPPQA). Residues 1618–1639 (LSSSTLANGESSSLPRTESSDF) show a composition bias toward polar residues. Residues 1640–1651 (SSTCTLNSSMSS) are compositionally biased toward low complexity. Residues 1734 to 1749 (DTHKDRPPEGKIRFDL) are compositionally biased toward basic and acidic residues. A compositionally biased stretch (polar residues) spans 1757–1770 (TDSTSHLSDTHCQT). Basic and acidic residues predominate over residues 1796-1814 (GCRESEMKRKTELKGKVAT). A coiled-coil region spans residues 1798 to 1827 (RESEMKRKTELKGKVATEEEEEEEEEGANS). Positions 1815-1824 (EEEEEEEEEG) are enriched in acidic residues. The segment covering 1828 to 1840 (IEDSNSNHGNRNT) has biased composition (polar residues). Phosphoserine occurs at positions 1878, 1908, 1988, 2044, 2054, 2140, 2143, 2194, and 2206. The segment at 2039–2064 (EGAHSSSNSRNGRITSNSLETGHPVE) is disordered. A compositionally biased stretch (polar residues) spans 2041 to 2058 (AHSSSNSRNGRITSNSLE). The disordered stretch occupies residues 2178–2237 (EDNDSALNLVKTPPSGSPSRDQVVGGNVSPREMPEQEAAVDVIPDHTRSNVYNSQDYLNG). Over residues 2226 to 2237 (SNVYNSQDYLNG) the composition is skewed to polar residues.

In terms of assembly, homodimer. Heterodimer of isoform 1 and isoform 2. Isoform 1 and isoform 2 interact with AR. In terms of tissue distribution, isoform 1 and isoform 2 are highly expressed in testis, moderately expressed in adrenal gland and uterus and faintly expressed in brain, kidney and liver. Isoform 1 is expressed more in adrenal gland, uterus and liver than isoform 2 is. Expression during testicular development of isoform 1 and isoform 2 is restricted to spermatocytes at the pachytene stage of meiotic prophase and to round and elongated spermatids.

It localises to the nucleus. Functionally, acts as a transcriptional corepressor for AR-mediated transactivation function. May act as a transcriptional regulator during spermatogenesis and in particular, during meiotic division. Its function is as follows. Acts as a transcriptional coactivator for AR-mediated transactivation function. May act as a transcriptional regulator during spermatogenesis and in particular, during meiotic division. The sequence is that of Zinc finger protein 318 (Znf318) from Mus musculus (Mouse).